We begin with the raw amino-acid sequence, 378 residues long: SWI/SNF-related matrix-associated actin-dependent regulator of chromatin subfamily B member 1 (378 aa).

Residues 1 to 106 are DNA-binding; sequence MIMALSKTFG…DEKYKAVSIS (106 aa).

This sequence belongs to the SNF5 family. As to quaternary structure, component of the multiprotein chromatin-remodeling complexes SWI/SNF. Component of neural progenitors-specific chromatin remodeling complex (npBAF complex) and the neuron-specific chromatin remodeling complex (nBAF complex). Component of the BAF (SWI/SNF) chromatin remodeling complex. Component of the SWI/SNF-B (PBAF) chromatin remodeling complex. Binds to double-stranded DNA.

The protein localises to the nucleus. Involved in chromatin-remodeling. Core component of the BAF (SWI/SNF) complex. This ATP-dependent chromatin-remodeling complex plays important roles in cell proliferation and differentiation, in cellular antiviral activities and inhibition of tumor formation. Belongs to the neural progenitors-specific chromatin remodeling complex (npBAF complex) and the neuron-specific chromatin remodeling complex (nBAF complex) and may play a role in neural development. The sequence is that of SWI/SNF-related matrix-associated actin-dependent regulator of chromatin subfamily B member 1 (smarcb1) from Xenopus tropicalis (Western clawed frog).